Consider the following 931-residue polypeptide: Isoleucine--tRNA ligase (931 aa).

The 'HIGH' region motif lies at Pro-58–His-68. L-isoleucyl-5'-AMP is bound at residue Glu-559. A 'KMSKS' region motif is present at residues Lys-600–Ser-604. Residue Lys-603 coordinates ATP. Zn(2+) is bound by residues Cys-894, Cys-897, Cys-914, and Cys-917.

It belongs to the class-I aminoacyl-tRNA synthetase family. IleS type 1 subfamily. As to quaternary structure, monomer. The cofactor is Zn(2+).

Its subcellular location is the cytoplasm. The enzyme catalyses tRNA(Ile) + L-isoleucine + ATP = L-isoleucyl-tRNA(Ile) + AMP + diphosphate. Its function is as follows. Catalyzes the attachment of isoleucine to tRNA(Ile). As IleRS can inadvertently accommodate and process structurally similar amino acids such as valine, to avoid such errors it has two additional distinct tRNA(Ile)-dependent editing activities. One activity is designated as 'pretransfer' editing and involves the hydrolysis of activated Val-AMP. The other activity is designated 'posttransfer' editing and involves deacylation of mischarged Val-tRNA(Ile). In Legionella pneumophila (strain Paris), this protein is Isoleucine--tRNA ligase.